The sequence spans 1146 residues: Ankyrin repeat domain-containing protein 24 (1146 aa).

5 ANK repeats span residues 81 to 110, 114 to 143, 147 to 176, 180 to 209, and 213 to 242; these read EGKSAFHLAAMRGAASCLEVMIAHGSNVMS, AGYNALHLAAKYGHPQCLKQLLQASCVVDV, SGWTALHHAAAGGCLSCSEVLCSFKAHLNP, SGATPLIIAAQMCHTDLCRLLLQQGAAAND, and QGRTALMLACEGASPETVEVLLQGGAQPGI. Disordered regions lie at residues 272-320, 607-627, and 766-785; these read RPSP…PDDR, REMETTEEEANMETKPTGAQA, and ERVREAEGSGASGGGGGDTT. Residues 286 to 297 show a composition bias toward polar residues; the sequence is EASSQNSMSSHG. Residues 320–517 adopt a coiled-coil conformation; sequence RDAYEEIVRL…QALRQQETRE (198 aa). Residues 714 to 1110 adopt a coiled-coil conformation; sequence AAEASEKLQV…AARDHSSVVA (397 aa).

As to quaternary structure, homodimer. Interacts (via C-terminal domain) with TRIOBP (via C-terminal domain) isoform 4; recruits TRIOBP isoform 4 to stereocilia rootlets.

Its subcellular location is the cell membrane. It localises to the cell projection. The protein localises to the stereocilium. Functionally, component of the stereocilia rootlet in hair cells of inner ear. Bridges the apical plasma membrane with the lower rootlet and maintains normal distribution of TRIOBP, thereby reinforcing stereocilia insertion points and organizing rootlets for hearing with long-term resilience. This chain is Ankyrin repeat domain-containing protein 24, found in Homo sapiens (Human).